Reading from the N-terminus, the 437-residue chain is RNA-binding motif, single-stranded-interacting protein 3 (437 aa).

Positions 28–57 are disordered; it reads YAPAPHPMAPPSPSTNSSSNNSSNNSSGEQ. Pro residues predominate over residues 31–40; it reads APHPMAPPSP. The span at 41–54 shows a compositional bias: low complexity; the sequence is STNSSSNNSSNNSS. RRM domains follow at residues 61–134 and 140–225; these read TNLY…MAKQ and TNLY…FADG. The span at 399–422 shows a compositional bias: polar residues; that stretch reads TSPQTVAPSSQDTSGQQQQIAVDT. A disordered region spans residues 399–437; sequence TSPQTVAPSSQDTSGQQQQIAVDTSNEHAPAYSYQQSKP.

As to expression, expressed in fetal brain, fetal lung, fetal liver, heart, brain, placenta, lung, liver, muscle, kidney and pancreas.

It is found in the cytoplasm. In terms of biological role, binds poly(A) and poly(U) oligoribonucleotides. The polypeptide is RNA-binding motif, single-stranded-interacting protein 3 (RBMS3) (Homo sapiens (Human)).